The following is a 534-amino-acid chain: Arginine--tRNA ligase (534 aa).

The 'HIGH' region signature appears at alanine 120 to histidine 130.

This sequence belongs to the class-I aminoacyl-tRNA synthetase family. Monomer.

It localises to the cytoplasm. The catalysed reaction is tRNA(Arg) + L-arginine + ATP = L-arginyl-tRNA(Arg) + AMP + diphosphate. This is Arginine--tRNA ligase from Mesomycoplasma hyopneumoniae (strain 7448) (Mycoplasma hyopneumoniae).